A 105-amino-acid chain; its full sequence is Heat shock protein HspQ (105 aa).

The protein belongs to the HspQ family.

The protein localises to the cytoplasm. Functionally, involved in the degradation of certain denaturated proteins, including DnaA, during heat shock stress. The chain is Heat shock protein HspQ from Baumannia cicadellinicola subsp. Homalodisca coagulata.